A 122-amino-acid polypeptide reads, in one-letter code: MIQPQTYLRVADNTGARELMCIRVLGGGKQRAATVGDIIIAVVKDATPNMPVKRSDIVRAVIVRTRKNVRRVNGTSIRFDENAAVIINKENNPRGTRVFGPVARELRDGNFTKIISLAPEVL.

Belongs to the universal ribosomal protein uL14 family. In terms of assembly, part of the 50S ribosomal subunit.

The protein resides in the plastid. It localises to the chloroplast. Its function is as follows. Binds to 23S rRNA. The chain is Large ribosomal subunit protein uL14c from Chlorella vulgaris (Green alga).